A 236-amino-acid chain; its full sequence is SPbeta prophage-derived uncharacterized lipoprotein YokB (236 aa).

The first 19 residues, Met-1–Gly-19, serve as a signal peptide directing secretion. A lipid anchor (N-palmitoyl cysteine) is attached at Cys-20. A lipid anchor (S-diacylglycerol cysteine) is attached at Cys-20. Disordered regions lie at residues Ser-23–Met-59 and Val-204–Lys-236. Residues Ser-31–Leu-53 are compositionally biased toward basic and acidic residues.

The protein resides in the cell membrane. This Bacillus subtilis (strain 168) protein is SPbeta prophage-derived uncharacterized lipoprotein YokB (yokB).